The sequence spans 758 residues: 52 kDa repressor of the inhibitor of the protein kinase (758 aa).

Residues 1-86 (MPNFCAAPNC…LRDNAIPTIF (86 aa)) form a THAP-type zinc finger. The tract at residues 116–141 (QKKIEETSEQEQETNTNAQNPSAEAV) is disordered. Phosphoserine is present on serine 563.

Interacts with DNAJC3, probably sequestring it.

In terms of biological role, upstream regulator of interferon-induced serine/threonine protein kinase R (PKR). May block the PKR-inhibitory function of DNAJC3, resulting in restoration of kinase activity and suppression of cell growth. The chain is 52 kDa repressor of the inhibitor of the protein kinase from Mus musculus (Mouse).